We begin with the raw amino-acid sequence, 109 residues long: Parvalbumin, muscle (109 aa).

Alanine 1 bears the N-acetylalanine mark. EF-hand domains are found at residues 38-73 (KSPEDVKKVFHILDKDRSGFIEEEELKFVLKGFTPD) and 77-109 (LSDKETKALLAAGDKDGDGKIGADEFATMVAES). The Ca(2+) site is built by aspartate 51, aspartate 53, serine 55, glutamate 62, aspartate 90, aspartate 92, aspartate 94, lysine 96, and glutamate 101.

This sequence belongs to the parvalbumin family.

Its function is as follows. In muscle, parvalbumin is thought to be involved in relaxation after contraction. It binds two calcium ions. This Gallus gallus (Chicken) protein is Parvalbumin, muscle.